The chain runs to 39 residues: Cytochrome b559 subunit beta (39 aa).

The chain crosses the membrane as a helical span at residues 14-30 (WLTVHGLAVPTVSFLGS). His18 lines the heme pocket.

The protein belongs to the PsbE/PsbF family. In terms of assembly, heterodimer of an alpha subunit and a beta subunit. PSII is composed of 1 copy each of membrane proteins PsbA, PsbB, PsbC, PsbD, PsbE, PsbF, PsbH, PsbI, PsbJ, PsbK, PsbL, PsbM, PsbT, PsbX, PsbY, PsbZ, Psb30/Ycf12, at least 3 peripheral proteins of the oxygen-evolving complex and a large number of cofactors. It forms dimeric complexes. The cofactor is heme b.

The protein localises to the plastid. The protein resides in the chloroplast thylakoid membrane. This b-type cytochrome is tightly associated with the reaction center of photosystem II (PSII). PSII is a light-driven water:plastoquinone oxidoreductase that uses light energy to abstract electrons from H(2)O, generating O(2) and a proton gradient subsequently used for ATP formation. It consists of a core antenna complex that captures photons, and an electron transfer chain that converts photonic excitation into a charge separation. This chain is Cytochrome b559 subunit beta, found in Lactuca sativa (Garden lettuce).